The chain runs to 25 residues: Acyl carrier protein (25 aa).

Positions 2 to 25 (ESIEQRVKKIVAEQLGVAEAEIKA) constitute a Carrier domain.

Belongs to the acyl carrier protein (ACP) family. 4'-phosphopantetheine is transferred from CoA to a specific serine of apo-ACP by AcpS. This modification is essential for activity because fatty acids are bound in thioester linkage to the sulfhydryl of the prosthetic group.

It localises to the cytoplasm. It functions in the pathway lipid metabolism; fatty acid biosynthesis. In terms of biological role, carrier of the growing fatty acid chain in fatty acid biosynthesis. This chain is Acyl carrier protein (acpP), found in Alcaligenes faecalis.